The following is a 447-amino-acid chain: MKPVIALVGRPNVGKSTLFNRMTRSRDALVADLPGLTRDRHYGEGRIGERPFIAIDTGGFEPVVKEGIVAEMAKQTKQAVVEADVVIFIVDGRLGLAPQDRAIADYLRKTGRRIMLAVNKAEGMKYTSVAADFYELGMGDPYAISAAHGDGVRELVDEAIELAVQERPELAEEASDEGKGVKIAIVGRPNVGKSTLVNTLIGEERVIAFDMPGTTRDAIYVEFERGGKPYTLIDTAGLRRRGKVFEAIEKFSVVKTLQSIADANVVILLLDAQQDISDQDAHIAGFIVESGRALVVGVNKWDGLDGHTRDRIKHDLERKLQFLSFANFHFVSARERTGIGALMRSVDDAYAAAMVKLPTPQLTRVLQEAVEFQQPKRVGASRPKLRYAHQGGSNPPIIVIHGNALSGVAETYRRYLENRFRAAFKLKGTPLRIEFRTNKNPYADSKD.

EngA-type G domains are found at residues proline 3–arginine 167 and valine 181–methionine 354. Residues glycine 9–serine 16, aspartate 56–phenylalanine 60, asparagine 119–glutamate 122, glycine 187–serine 194, aspartate 234–leucine 238, and asparagine 299–aspartate 302 contribute to the GTP site. One can recognise a KH-like domain in the interval valine 355 to lysine 439.

It belongs to the TRAFAC class TrmE-Era-EngA-EngB-Septin-like GTPase superfamily. EngA (Der) GTPase family. As to quaternary structure, associates with the 50S ribosomal subunit.

In terms of biological role, GTPase that plays an essential role in the late steps of ribosome biogenesis. The protein is GTPase Der of Cupriavidus taiwanensis (strain DSM 17343 / BCRC 17206 / CCUG 44338 / CIP 107171 / LMG 19424 / R1) (Ralstonia taiwanensis (strain LMG 19424)).